The primary structure comprises 498 residues: Glycerol kinase (498 aa).

ADP is bound at residue T12. Residues T12, T13, and S14 each contribute to the ATP site. Residue T12 coordinates sn-glycerol 3-phosphate. R16 lines the ADP pocket. Residues R82, E83, Y134, and D244 each contribute to the sn-glycerol 3-phosphate site. 5 residues coordinate glycerol: R82, E83, Y134, D244, and Q245. The ADP site is built by T266 and G310. Positions 266, 310, 314, and 411 each coordinate ATP. The ADP site is built by G411 and N415.

This sequence belongs to the FGGY kinase family.

It carries out the reaction glycerol + ATP = sn-glycerol 3-phosphate + ADP + H(+). It participates in polyol metabolism; glycerol degradation via glycerol kinase pathway; sn-glycerol 3-phosphate from glycerol: step 1/1. Its activity is regulated as follows. Inhibited by fructose 1,6-bisphosphate (FBP). Its function is as follows. Key enzyme in the regulation of glycerol uptake and metabolism. Catalyzes the phosphorylation of glycerol to yield sn-glycerol 3-phosphate. The polypeptide is Glycerol kinase (Roseiflexus sp. (strain RS-1)).